The chain runs to 277 residues: Undecaprenyl-diphosphatase (277 aa).

Helical transmembrane passes span 88 to 108, 117 to 137, 157 to 179, 191 to 211, 227 to 247, and 255 to 275; these read MGWL…LFQD, MWIV…ADAV, FAQA…AGLL, SFLL…YKVV, LATV…LKFV, and FVWY…FGVI.

It belongs to the UppP family.

It localises to the cell membrane. The catalysed reaction is di-trans,octa-cis-undecaprenyl diphosphate + H2O = di-trans,octa-cis-undecaprenyl phosphate + phosphate + H(+). Catalyzes the dephosphorylation of undecaprenyl diphosphate (UPP). Confers resistance to bacitracin. This Pseudarthrobacter chlorophenolicus (strain ATCC 700700 / DSM 12829 / CIP 107037 / JCM 12360 / KCTC 9906 / NCIMB 13794 / A6) (Arthrobacter chlorophenolicus) protein is Undecaprenyl-diphosphatase.